A 406-amino-acid polypeptide reads, in one-letter code: Magnesium transporter NIPA4 (406 aa).

Residues M1–G57 lie on the Extracellular side of the membrane. Residues N9, N14, and N42 are each glycosylated (N-linked (GlcNAc...) asparagine). The chain crosses the membrane as a helical span at residues F58–L78. Residues K79 to A126 are Cytoplasmic-facing. A helical membrane pass occupies residues F127 to F147. The Extracellular segment spans residues S148–S155. Residues L156–I176 traverse the membrane as a helical segment. The Cytoplasmic segment spans residues H177–T197. The chain crosses the membrane as a helical span at residues G198–A218. Residues P219–N225 lie on the Extracellular side of the membrane. A helical transmembrane segment spans residues I226–G246. Topologically, residues L247–H263 are cytoplasmic. The chain crosses the membrane as a helical span at residues P264–L284. Over N285 to L295 the chain is Extracellular. A glycan (N-linked (GlcNAc...) asparagine) is linked at N292. The chain crosses the membrane as a helical span at residues V296–F316. The Cytoplasmic segment spans residues K317–D326. The helical transmembrane segment at I327 to F347 threads the bilayer. The Extracellular portion of the chain corresponds to K348–S406.

It belongs to the NIPA family.

It is found in the cell membrane. The catalysed reaction is Mg(2+)(in) = Mg(2+)(out). Its function is as follows. Acts as a Mg(2+) transporter. Can also transport other divalent cations such as Ba(2+), Sr(2+) and Fe(2+) but to a much less extent than Mg(2+). May be a receptor for ligands (trioxilins A3 and B3) from the hepoxilin pathway. This chain is Magnesium transporter NIPA4 (Nipal4), found in Mus musculus (Mouse).